A 95-amino-acid polypeptide reads, in one-letter code: UPF0235 protein PTH_1821 (95 aa).

This sequence belongs to the UPF0235 family.

The protein is UPF0235 protein PTH_1821 of Pelotomaculum thermopropionicum (strain DSM 13744 / JCM 10971 / SI).